A 188-amino-acid chain; its full sequence is dCTP deaminase (188 aa).

A dCTP-binding site is contributed by Lys-109–Arg-114. Catalysis depends on Glu-135, which acts as the Proton donor/acceptor. Positions 154, 168, and 178 each coordinate dCTP.

This sequence belongs to the dCTP deaminase family. As to quaternary structure, homotrimer.

It catalyses the reaction dCTP + H2O + H(+) = dUTP + NH4(+). It functions in the pathway pyrimidine metabolism; dUMP biosynthesis; dUMP from dCTP (dUTP route): step 1/2. Its function is as follows. Catalyzes the deamination of dCTP to dUTP. The protein is dCTP deaminase of Helicobacter pylori (strain Shi470).